The following is a 778-amino-acid chain: Subtilisin-like protease SBT3.6 (778 aa).

A signal peptide spans 1 to 22 (MMNYRTSIYVVLSLVIFLNVQR). A propeptide spans 23 to 113 (SFVAESSAKR…VIPDSFYKLA (91 aa)) (activation peptide). One can recognise an Inhibitor I9 domain in the interval 34-113 (VHIVYLGEKQ…VIPDSFYKLA (80 aa)). Asn69 is a glycosylation site (N-linked (GlcNAc...) asparagine). Residues 117–625 (TWDYLGLSAA…GGLVNPEKSA (509 aa)) form the Peptidase S8 domain. Asp147 serves as the catalytic Charge relay system. Asn158, Asn180, Asn202, and Asn206 each carry an N-linked (GlcNAc...) asparagine glycan. Residue His222 is the Charge relay system of the active site. Residues Asn237, Asn399, Asn414, and Asn541 are each glycosylated (N-linked (GlcNAc...) asparagine). The PA domain maps to 388–483 (SLVYPENPGN…ELGTDILLYT (96 aa)). Ser556 serves as the catalytic Charge relay system. 3 N-linked (GlcNAc...) asparagine glycosylation sites follow: Asn648, Asn724, and Asn759.

The protein belongs to the peptidase S8 family.

The protein localises to the secreted. In Arabidopsis thaliana (Mouse-ear cress), this protein is Subtilisin-like protease SBT3.6.